Here is a 298-residue protein sequence, read N- to C-terminus: Probable pyridoxal 5'-phosphate synthase subunit SNZ2 (298 aa).

D-ribose 5-phosphate is bound at residue aspartate 21. The Schiff-base intermediate with D-ribose 5-phosphate role is filled by lysine 78. Residues glycine 150, glycine 213, and 234-235 contribute to the D-ribose 5-phosphate site; that span reads GS.

Belongs to the PdxS/SNZ family. As to quaternary structure, homohexamer. Interacts with THI11.

The enzyme catalyses aldehydo-D-ribose 5-phosphate + D-glyceraldehyde 3-phosphate + L-glutamine = pyridoxal 5'-phosphate + L-glutamate + phosphate + 3 H2O + H(+). Its pathway is cofactor biosynthesis; pyridoxal 5'-phosphate biosynthesis. Its function is as follows. Catalyzes the formation of pyridoxal 5'-phosphate from ribose 5-phosphate (RBP), glyceraldehyde 3-phosphate (G3P) and ammonia. The ammonia is provided by a SNO isoform. Can also use ribulose 5-phosphate and dihydroxyacetone phosphate as substrates, resulting from enzyme-catalyzed isomerization of RBP and G3P, respectively. In Saccharomyces cerevisiae (strain ATCC 204508 / S288c) (Baker's yeast), this protein is Probable pyridoxal 5'-phosphate synthase subunit SNZ2 (SNZ2).